The following is a 171-amino-acid chain: CDP-archaeol synthase (171 aa).

The next 5 helical transmembrane spans lie at 7–27 (MFWALWYILPAYFANASPVLL), 55–75 (FLGGVSVGTLVGVLQYYLTPA), 84–104 (VLLAFLLSFGALMGDLVGSFI), 115–135 (PAVGLDQLGFLISALAFAYPV), and 141–161 (GQMLFLLIFTPLVHWGANYFA).

It belongs to the CDP-archaeol synthase family. The cofactor is Mg(2+).

The protein resides in the cell membrane. The enzyme catalyses 2,3-bis-O-(geranylgeranyl)-sn-glycerol 1-phosphate + CTP + H(+) = CDP-2,3-bis-O-(geranylgeranyl)-sn-glycerol + diphosphate. It functions in the pathway membrane lipid metabolism; glycerophospholipid metabolism. Functionally, catalyzes the formation of CDP-2,3-bis-(O-geranylgeranyl)-sn-glycerol (CDP-archaeol) from 2,3-bis-(O-geranylgeranyl)-sn-glycerol 1-phosphate (DGGGP) and CTP. This reaction is the third ether-bond-formation step in the biosynthesis of archaeal membrane lipids. In Thermococcus gammatolerans (strain DSM 15229 / JCM 11827 / EJ3), this protein is CDP-archaeol synthase.